The following is a 939-amino-acid chain: Isoleucine--tRNA ligase (939 aa).

The short motif at 59-69 is the 'HIGH' region element; that stretch reads PYANGDIHIGH. L-isoleucyl-5'-AMP is bound at residue glutamate 570. The 'KMSKS' region motif lies at 611 to 615; that stretch reads KMSKS. Lysine 614 contacts ATP. Zn(2+) is bound by residues cysteine 902, cysteine 905, cysteine 922, and cysteine 925.

The protein belongs to the class-I aminoacyl-tRNA synthetase family. IleS type 1 subfamily. As to quaternary structure, monomer. The cofactor is Zn(2+).

The protein localises to the cytoplasm. It catalyses the reaction tRNA(Ile) + L-isoleucine + ATP = L-isoleucyl-tRNA(Ile) + AMP + diphosphate. In terms of biological role, catalyzes the attachment of isoleucine to tRNA(Ile). As IleRS can inadvertently accommodate and process structurally similar amino acids such as valine, to avoid such errors it has two additional distinct tRNA(Ile)-dependent editing activities. One activity is designated as 'pretransfer' editing and involves the hydrolysis of activated Val-AMP. The other activity is designated 'posttransfer' editing and involves deacylation of mischarged Val-tRNA(Ile). The chain is Isoleucine--tRNA ligase from Nitrosomonas europaea (strain ATCC 19718 / CIP 103999 / KCTC 2705 / NBRC 14298).